Reading from the N-terminus, the 760-residue chain is Catalase-peroxidase (760 aa).

The segment at 1–22 (MSQGECPVKKVPNVAGSGTRNT) is disordered. The tryptophyl-tyrosyl-methioninium (Trp-Tyr) (with M-268) cross-link spans 93–242 (WHSAGTYRVT…LAAAHMGLIY (150 aa)). Residue histidine 94 is the Proton acceptor of the active site. Residues 206–226 (KGEGIMDGDQHKTDKSEPHTS) form a disordered region. A compositionally biased stretch (basic and acidic residues) spans 213–226 (GDQHKTDKSEPHTS). The tryptophyl-tyrosyl-methioninium (Tyr-Met) (with W-93) cross-link spans 242–268 (YVNPEGPEGIPDPVAAAHDIRTTFGRM). Histidine 283 serves as a coordination point for heme b.

Belongs to the peroxidase family. Peroxidase/catalase subfamily. Homodimer or homotetramer. Requires heme b as cofactor. Formation of the three residue Trp-Tyr-Met cross-link is important for the catalase, but not the peroxidase activity of the enzyme.

The protein localises to the cytoplasm. The enzyme catalyses H2O2 + AH2 = A + 2 H2O. It carries out the reaction 2 H2O2 = O2 + 2 H2O. In terms of biological role, bifunctional enzyme with both catalase and broad-spectrum peroxidase activity. This is Catalase-peroxidase from Pyrenophora tritici-repentis (strain Pt-1C-BFP) (Wheat tan spot fungus).